The primary structure comprises 606 residues: NADH-ubiquinone oxidoreductase chain 5 (606 aa).

The next 16 helical transmembrane spans lie at 1 to 21 (MNLFTPLMLTAMFILLLPIIM), 43 to 63 (AFIISMIPTMMFISSGQEAII), 88 to 108 (IFIPVALFVTWSIMEFSMWYM), 117 to 137 (FFKYLLMFLITMMILVTANNL), 140 to 160 (LFIGWEGVGIMSFLLIGWWYG), 171 to 191 (AILYNRIGDVGFIMAMAWFLT), 209 to 229 (LNIPLLGLLLAATGKSAQFGL), 241 to 261 (TPVSALLHSSTMVVAGVFLLI), 273 to 293 (MQTLTLCLGAITTLFTAICAL), 310 to 330 (LGLMIVTIGINQPYLAFLHIC), 366 to 386 (MPFTTTSLIIGSLALTGMPFL), 413 to 433 (LIATSLTAAYSTRIMFFVLLG), 457 to 477 (LLIGSIFAGYLISYNIPPTTI), 488 to 508 (LTALAVTIAGFILALELNLAA), 513 to 533 (FMYPSNLFKFSNLLGYFPIVM), and 582 to 602 (GLVKLYFLSFMITLALSLILL).

The protein belongs to the complex I subunit 5 family. As to quaternary structure, core subunit of respiratory chain NADH dehydrogenase (Complex I) which is composed of 45 different subunits.

The protein localises to the mitochondrion inner membrane. It carries out the reaction a ubiquinone + NADH + 5 H(+)(in) = a ubiquinol + NAD(+) + 4 H(+)(out). In terms of biological role, core subunit of the mitochondrial membrane respiratory chain NADH dehydrogenase (Complex I) which catalyzes electron transfer from NADH through the respiratory chain, using ubiquinone as an electron acceptor. Essential for the catalytic activity and assembly of complex I. This chain is NADH-ubiquinone oxidoreductase chain 5 (MT-ND5), found in Felis catus (Cat).